A 117-amino-acid polypeptide reads, in one-letter code: Histone-like protein Hq1 (117 aa).

Basic residues-rich tracts occupy residues 1-17 and 39-50; these read MPAK…RSKA and RKLRAAQKKLAK. Positions 1 to 117 are disordered; it reads MPAKKRKTTR…RGRGRPRKKA (117 aa). Basic and acidic residues predominate over residues 51–68; it reads AKKDASRKLAKLRKEAAR. The span at 71 to 117 shows a compositional bias: basic residues; the sequence is AAAKKTRAPSKKGRKKATRKKGGGRSRKTARKVSTMKRGRGRPRKKA.

In terms of biological role, binds DNA in vitro. In Coxiella burnetii (strain RSA 493 / Nine Mile phase I), this protein is Histone-like protein Hq1 (hcbA).